Reading from the N-terminus, the 82-residue chain is MSYEKVLQAGKIVIGTKQTIRALKEGEATEVIVAEDADLPIIEKVTAAANEANVPVTKVDSMKKLGKACKIQVGAAAVAILR.

It belongs to the eukaryotic ribosomal protein eL8 family.

The chain is RNA-binding protein YbxF from Geobacillus stearothermophilus (Bacillus stearothermophilus).